The following is a 161-amino-acid chain: Nucleotide-binding protein Ssed_3443 (161 aa).

It belongs to the YajQ family.

Nucleotide-binding protein. The polypeptide is Nucleotide-binding protein Ssed_3443 (Shewanella sediminis (strain HAW-EB3)).